The chain runs to 189 residues: Glucose-6-phosphate isomerase (189 aa).

Positions 88, 90, 97, and 136 each coordinate Fe cation.

Belongs to the archaeal-type GPI family. Homodimer. Fe cation serves as cofactor.

The protein localises to the cytoplasm. It carries out the reaction alpha-D-glucose 6-phosphate = beta-D-fructose 6-phosphate. It functions in the pathway carbohydrate degradation; glycolysis; D-glyceraldehyde 3-phosphate and glycerone phosphate from D-glucose: step 2/4. In Pyrococcus horikoshii (strain ATCC 700860 / DSM 12428 / JCM 9974 / NBRC 100139 / OT-3), this protein is Glucose-6-phosphate isomerase (pgiA).